Consider the following 416-residue polypeptide: Diaminopimelate decarboxylase (416 aa).

Lys-60 bears the N6-(pyridoxal phosphate)lysine mark. Residues Gly-240 and 274 to 277 (EPGR) contribute to the pyridoxal 5'-phosphate site. The substrate site is built by Arg-277, Arg-313, and Tyr-317. Cys-343 functions as the Proton donor in the catalytic mechanism. Residues Glu-344 and Tyr-371 each contribute to the substrate site. A pyridoxal 5'-phosphate-binding site is contributed by Tyr-371.

The protein belongs to the Orn/Lys/Arg decarboxylase class-II family. LysA subfamily. As to quaternary structure, homodimer. It depends on pyridoxal 5'-phosphate as a cofactor.

The enzyme catalyses meso-2,6-diaminopimelate + H(+) = L-lysine + CO2. It participates in amino-acid biosynthesis; L-lysine biosynthesis via DAP pathway; L-lysine from DL-2,6-diaminopimelate: step 1/1. Its function is as follows. Specifically catalyzes the decarboxylation of meso-diaminopimelate (meso-DAP) to L-lysine. In Pseudomonas fluorescens, this protein is Diaminopimelate decarboxylase.